Consider the following 341-residue polypeptide: Phosphoribosylformylglycinamidine cyclo-ligase (341 aa).

Belongs to the AIR synthase family.

It localises to the cytoplasm. It catalyses the reaction 2-formamido-N(1)-(5-O-phospho-beta-D-ribosyl)acetamidine + ATP = 5-amino-1-(5-phospho-beta-D-ribosyl)imidazole + ADP + phosphate + H(+). It functions in the pathway purine metabolism; IMP biosynthesis via de novo pathway; 5-amino-1-(5-phospho-D-ribosyl)imidazole from N(2)-formyl-N(1)-(5-phospho-D-ribosyl)glycinamide: step 2/2. This is Phosphoribosylformylglycinamidine cyclo-ligase from Synechocystis sp. (strain ATCC 27184 / PCC 6803 / Kazusa).